The chain runs to 627 residues: Endoglucanase 5 (627 aa).

Positions 1–26 (MRKFGGSLFGVSLLLSVLLAAATAAA) are cleaved as a signal peptide. Aspartate 83 (nucleophile) is an active-site residue. Asparagine 196 carries an N-linked (GlcNAc...) asparagine glycan. Residue histidine 416 is part of the active site. Asparagine 465 carries an N-linked (GlcNAc...) asparagine glycan. Catalysis depends on residues aspartate 468 and glutamate 477. Asparagine 561 carries N-linked (GlcNAc...) asparagine glycosylation.

Belongs to the glycosyl hydrolase 9 (cellulase E) family.

Its subcellular location is the secreted. It catalyses the reaction Endohydrolysis of (1-&gt;4)-beta-D-glucosidic linkages in cellulose, lichenin and cereal beta-D-glucans.. This Arabidopsis thaliana (Mouse-ear cress) protein is Endoglucanase 5.